The chain runs to 156 residues: Small ribosomal subunit protein uS7 (156 aa).

The protein belongs to the universal ribosomal protein uS7 family. As to quaternary structure, part of the 30S ribosomal subunit. Contacts proteins S9 and S11.

One of the primary rRNA binding proteins, it binds directly to 16S rRNA where it nucleates assembly of the head domain of the 30S subunit. Is located at the subunit interface close to the decoding center, probably blocks exit of the E-site tRNA. The polypeptide is Small ribosomal subunit protein uS7 (Streptococcus pneumoniae serotype 4 (strain ATCC BAA-334 / TIGR4)).